Here is a 464-residue protein sequence, read N- to C-terminus: Glycine receptor subunit alpha-3 (464 aa).

A signal peptide spans 1–33 (MAHVRHFRTLVSGFYFWEAALLLSLVATKETDS). The Extracellular portion of the chain corresponds to 34 to 255 (ARSRSAPMSP…RFHLERQMGY (222 aa)). N-linked (GlcNAc...) asparagine glycosylation occurs at Asn-71. Cys-171 and Cys-185 are joined by a disulfide. Zn(2+) is bound by residues Glu-225 and Asp-227. An intrachain disulfide couples Cys-231 to Cys-242. Residue 235–240 (YNTGKF) coordinates strychnine. His-248 is a Zn(2+) binding site. Residues 256–277 (YLIQMYIPSLLIVILSWVSFWI) form a helical membrane-spanning segment. The Cytoplasmic portion of the chain corresponds to 278 to 282 (NMDAA). A helical membrane pass occupies residues 283 to 303 (PARVALGITTVLTMTTQSSGS). Over 304-314 (RASLPKVSYVK) the chain is Extracellular. Residues 315–335 (AIDIWMAVCLLFVFSALLEYA) form a helical membrane-spanning segment. The Cytoplasmic portion of the chain corresponds to 336 to 430 (AVNFVSRQHK…FIDRAKKIDT (95 aa)). Residues Ser-370 and Ser-379 each carry the phosphoserine modification. A helical transmembrane segment spans residues 431 to 451 (ISRACFPLAFLIFNIFYWVIY). Topologically, residues 452-464 (KILRHEDIHQQQD) are extracellular.

Belongs to the ligand-gated ion channel (TC 1.A.9) family. Glycine receptor (TC 1.A.9.3) subfamily. GLRA3 sub-subfamily. Homopentamer (in vitro). Heteropentamer composed of GLRA3 and GLRB. Both homopentamers and heteropentamers form functional ion channels, but their characteristics are subtly different. In terms of processing, phosphorylated by PKA; this causes down-regulation of channel activity. Widely distributed throughout the central nervous system.

It localises to the postsynaptic cell membrane. The protein localises to the perikaryon. Its subcellular location is the cell projection. The protein resides in the dendrite. It is found in the synapse. It localises to the cell membrane. It carries out the reaction chloride(in) = chloride(out). Its function is as follows. Glycine receptors are ligand-gated chloride channels. Channel opening is triggered by extracellular glycine. Channel characteristics depend on the subunit composition; heteropentameric channels display faster channel closure. Plays an important role in the down-regulation of neuronal excitability. Contributes to the generation of inhibitory postsynaptic currents. Contributes to increased pain perception in response to increased prostaglandin E2 levels. Plays a role in cellular responses to ethanol. This chain is Glycine receptor subunit alpha-3 (GLRA3), found in Homo sapiens (Human).